The chain runs to 124 residues: Ribonuclease P protein component 2 (124 aa).

It belongs to the eukaryotic/archaeal RNase P protein component 2 family. Consists of a catalytic RNA component and at least 4-5 protein subunits.

It is found in the cytoplasm. It carries out the reaction Endonucleolytic cleavage of RNA, removing 5'-extranucleotides from tRNA precursor.. Part of ribonuclease P, a protein complex that generates mature tRNA molecules by cleaving their 5'-ends. The protein is Ribonuclease P protein component 2 of Methanothermobacter thermautotrophicus (strain ATCC 29096 / DSM 1053 / JCM 10044 / NBRC 100330 / Delta H) (Methanobacterium thermoautotrophicum).